A 304-amino-acid chain; its full sequence is Small ribosomal subunit biogenesis GTPase RsgA (304 aa).

In terms of domain architecture, CP-type G spans 78-237; the sequence is VSFLTRPPVA…VADTPGFNRP (160 aa). GTP-binding positions include 127–130 and 179–187; these read TKTD and GPSGVGKSS. The Zn(2+) site is built by Cys-262, Cys-267, His-269, and Cys-275.

Belongs to the TRAFAC class YlqF/YawG GTPase family. RsgA subfamily. Monomer. Associates with 30S ribosomal subunit, binds 16S rRNA. Zn(2+) serves as cofactor.

The protein resides in the cytoplasm. One of several proteins that assist in the late maturation steps of the functional core of the 30S ribosomal subunit. Helps release RbfA from mature subunits. May play a role in the assembly of ribosomal proteins into the subunit. Circularly permuted GTPase that catalyzes slow GTP hydrolysis, GTPase activity is stimulated by the 30S ribosomal subunit. The chain is Small ribosomal subunit biogenesis GTPase RsgA from Synechococcus sp. (strain CC9311).